The sequence spans 208 residues: EF-hand protein 5 variant 1 (208 aa).

Positions 1 to 34 (MQARGTVKVQGDAKVDGKMSTGQHSHHQHLNSTQ) are disordered. 4 consecutive EF-hand domains span residues 64-98 (MAEG…HLTE), 99-134 (EEFH…EVDD), 135-170 (TMAD…LGER), and 171-206 (STPE…SRVN). Residues Glu118, Asp123, Asp148, Thr152, and Tyr154 each contribute to the Ca(2+) site.

The polypeptide is EF-hand protein 5 variant 1 (Trypanosoma cruzi).